Reading from the N-terminus, the 251-residue chain is MWIGIISLFPEMFKAITDFGVTGRAIKQNLLQIECWNPRDFTFDKHHTVDDRPYGGGPGMLMMVQPLRDAIQVAKQVARSEDGVEAKVIYLSPQGRKLDQQGVRELSANRKLILICGRYEGVDERLIQSEVDEEWSIGDYVLTGGELPAMTLIDAIARFVPGVLGKQASALEDSFAEGLLDCPHYTRPEVLDNMPVPQVLMSGNHEQIRKWRLAQSLERTWLRRPELLDSLALTDEQRVLLAKIKQQYKIS.

Residues Gly117 and 137–142 contribute to the S-adenosyl-L-methionine site; that span reads IGDYVL.

This sequence belongs to the RNA methyltransferase TrmD family. Homodimer.

It localises to the cytoplasm. The enzyme catalyses guanosine(37) in tRNA + S-adenosyl-L-methionine = N(1)-methylguanosine(37) in tRNA + S-adenosyl-L-homocysteine + H(+). In terms of biological role, specifically methylates guanosine-37 in various tRNAs. This chain is tRNA (guanine-N(1)-)-methyltransferase, found in Haemophilus ducreyi (strain 35000HP / ATCC 700724).